We begin with the raw amino-acid sequence, 570 residues long: Formate--tetrahydrofolate ligase (570 aa).

An ATP-binding site is contributed by 65 to 72 (TPFGEGKT).

This sequence belongs to the formate--tetrahydrofolate ligase family.

The enzyme catalyses (6S)-5,6,7,8-tetrahydrofolate + formate + ATP = (6R)-10-formyltetrahydrofolate + ADP + phosphate. The protein operates within one-carbon metabolism; tetrahydrofolate interconversion. The chain is Formate--tetrahydrofolate ligase from Shewanella halifaxensis (strain HAW-EB4).